A 155-amino-acid chain; its full sequence is DNA gyrase inhibitor (155 aa).

It belongs to the DNA gyrase inhibitor family. As to quaternary structure, interacts with DNA gyrase.

The protein resides in the cytoplasm. Functionally, inhibits the supercoiling activity of DNA gyrase. Acts by inhibiting DNA gyrase at an early step, prior to (or at the step of) binding of DNA by the gyrase. It protects cells against toxins that target DNA gyrase, by inhibiting activity of these toxins and reducing the formation of lethal double-strand breaks in the cell. The chain is DNA gyrase inhibitor from Citrobacter koseri (strain ATCC BAA-895 / CDC 4225-83 / SGSC4696).